The chain runs to 168 residues: MEKNNNFEMLGYVAWLWANSPLHRNWSLSLLAINVLPAIQYGQYTLLMRDGVPIAFCSWANLSLENEIKYLEDVSSLVYDDWNSGDRKWFIDWIAPFGHNYVLYKHMRKSFPYDLFRSIRVYKGSSEGKITEFHGGKVDKQLANKIFQQYHFELINELKNKSEVISIN.

Catalysis depends on residues histidine 23 and aspartate 92.

Belongs to the RTX toxin acyltransferase family.

The protein localises to the cytoplasm. It catalyses the reaction a fatty acyl-[ACP] + L-lysyl-[protein] = N(6)-(fatty acyl)-L-lysyl-[protein] + holo-[ACP] + H(+). Its function is as follows. Required for full activity and modification of the LtxA leukotoxin. Involved in fatty acid modification of the protoxin at two internal lysine residues, thereby converting it to the active toxin. This is Leukotoxin-activating lysine-acyltransferase LtxC from Aggregatibacter actinomycetemcomitans (Actinobacillus actinomycetemcomitans).